The following is a 418-amino-acid chain: Glutamyl-tRNA reductase (418 aa).

Residues 49–52 (TCNR), Ser-109, 114–116 (EPQ), and Gln-120 contribute to the substrate site. The Nucleophile role is filled by Cys-50. Residue 189 to 194 (GAGETI) coordinates NADP(+).

Belongs to the glutamyl-tRNA reductase family. In terms of assembly, homodimer.

The catalysed reaction is (S)-4-amino-5-oxopentanoate + tRNA(Glu) + NADP(+) = L-glutamyl-tRNA(Glu) + NADPH + H(+). The protein operates within porphyrin-containing compound metabolism; protoporphyrin-IX biosynthesis; 5-aminolevulinate from L-glutamyl-tRNA(Glu): step 1/2. Catalyzes the NADPH-dependent reduction of glutamyl-tRNA(Glu) to glutamate 1-semialdehyde (GSA). The protein is Glutamyl-tRNA reductase of Escherichia coli O45:K1 (strain S88 / ExPEC).